Here is a 260-residue protein sequence, read N- to C-terminus: Thiazole synthase (260 aa).

Residue lysine 102 is the Schiff-base intermediate with DXP of the active site. 1-deoxy-D-xylulose 5-phosphate is bound by residues glycine 163, 189–190 (AG), and 211–212 (NT).

This sequence belongs to the ThiG family. In terms of assembly, homotetramer. Forms heterodimers with either ThiH or ThiS.

It localises to the cytoplasm. It carries out the reaction [ThiS sulfur-carrier protein]-C-terminal-Gly-aminoethanethioate + 2-iminoacetate + 1-deoxy-D-xylulose 5-phosphate = [ThiS sulfur-carrier protein]-C-terminal Gly-Gly + 2-[(2R,5Z)-2-carboxy-4-methylthiazol-5(2H)-ylidene]ethyl phosphate + 2 H2O + H(+). It participates in cofactor biosynthesis; thiamine diphosphate biosynthesis. Functionally, catalyzes the rearrangement of 1-deoxy-D-xylulose 5-phosphate (DXP) to produce the thiazole phosphate moiety of thiamine. Sulfur is provided by the thiocarboxylate moiety of the carrier protein ThiS. In vitro, sulfur can be provided by H(2)S. This Geobacter sulfurreducens (strain ATCC 51573 / DSM 12127 / PCA) protein is Thiazole synthase.